A 525-amino-acid chain; its full sequence is GMP synthase [glutamine-hydrolyzing] (525 aa).

A Glutamine amidotransferase type-1 domain is found at 9–207 (RILILDFGSQ…VLDICGCDAL (199 aa)). C86 (nucleophile) is an active-site residue. Catalysis depends on residues H181 and E183. The GMPS ATP-PPase domain occupies 208–400 (WTSAAIIEDT…LGLPYDMLYR (193 aa)). 235-241 (SGGVDSS) provides a ligand contact to ATP.

As to quaternary structure, homodimer.

It carries out the reaction XMP + L-glutamine + ATP + H2O = GMP + L-glutamate + AMP + diphosphate + 2 H(+). It participates in purine metabolism; GMP biosynthesis; GMP from XMP (L-Gln route): step 1/1. Its function is as follows. Catalyzes the synthesis of GMP from XMP. This Proteus mirabilis (strain HI4320) protein is GMP synthase [glutamine-hydrolyzing].